A 62-amino-acid chain; its full sequence is Alpha-conotoxin-like Qc1.2 (62 aa).

The N-terminal stretch at 1 to 21 is a signal peptide; sequence MGMRMMFTVFLLVALATTVAS. Positions 22-48 are excised as a propeptide; that stretch reads FTLDRASNGRNAAADDKPSDWIALAIK. Gln49 bears the Pyrrolidone carboxylic acid mark. Cystine bridges form between Cys50–Cys56 and Cys51–Cys61.

This sequence belongs to the conotoxin A superfamily. As to expression, expressed by the venom duct.

It localises to the secreted. Alpha-conotoxins bind to the nicotinic acetylcholine receptors (nAChR) and inhibit them. This synthetic peptide (10 uM) selectively, but weakly inhibits both rat neuronal alpha-3-beta-2/CHRNA3-CHRNB2 (63%) and alpha-3-beta-4/CHRNA3-CHRNB4 (37%) subtypes of nAChR. This chain is Alpha-conotoxin-like Qc1.2, found in Conus quercinus (Oak cone).